The sequence spans 408 residues: GTPase HflX (408 aa).

The Hflx-type G domain maps to 198–361 (PRVSLVGYTN…LIVREMERHY (164 aa)). GTP contacts are provided by residues 204–211 (GYTNAGKS), 229–233 (FVTLD), 251–254 (DTVG), 317–320 (NKAD), and 339–341 (SAK). Mg(2+) is bound by residues S211 and T231.

This sequence belongs to the TRAFAC class OBG-HflX-like GTPase superfamily. HflX GTPase family. Monomer. Associates with the 50S ribosomal subunit. Mg(2+) is required as a cofactor.

The protein localises to the cytoplasm. Its function is as follows. GTPase that associates with the 50S ribosomal subunit and may have a role during protein synthesis or ribosome biogenesis. The sequence is that of GTPase HflX from Spirochaeta thermophila (strain ATCC 49972 / DSM 6192 / RI 19.B1).